The sequence spans 259 residues: L-erythrulose-1-phosphate isomerase (259 aa).

The Electrophile role is filled by His102. Residue Glu174 is the Proton acceptor of the active site.

This sequence belongs to the triosephosphate isomerase family.

The catalysed reaction is L-erythrulose 1-phosphate = D-erythrulose 4-phosphate. It participates in carbohydrate metabolism. Functionally, involved in catabolism of D-apiose. Catalyzes the isomerization of L-erythrulose 1-phosphate to D-erythrulose 4-phosphate. The sequence is that of L-erythrulose-1-phosphate isomerase from Pectobacterium atrosepticum (strain SCRI 1043 / ATCC BAA-672) (Erwinia carotovora subsp. atroseptica).